The primary structure comprises 367 residues: Pectate trisaccharide-lyase (367 aa).

A signal peptide spans 1 to 27; the sequence is MLMRFSRVVSLVLLLVFTAVLTGAVKA. Ca(2+)-binding residues include Asp-144, Asp-166, and Asp-170. Residues 151–173 form a PbH1 1 repeat; the sequence is SHHIWIDHCTFVNGNDGAVDIKK. Residue Arg-224 is part of the active site. One copy of the PbH1 2 repeat lies at 263-289; it reads GAKVHVEGNYFMGYGAVMAEAGIAFLP.

The protein belongs to the polysaccharide lyase 1 family. As to quaternary structure, homotetramer. The cofactor is Ca(2+).

Its subcellular location is the secreted. The enzyme catalyses eliminative cleavage of unsaturated trigalacturonate as the major product from the reducing end of polygalacturonic acid/pectate.. With respect to regulation, completely inactivated by EGTA. In terms of biological role, cleaves unsaturated trigalacturonate from pectin. Activity is highest towards polygalacturonic acid, activity on methylated pectins decreases with an increasing degree of methylation. This Thermotoga maritima (strain ATCC 43589 / DSM 3109 / JCM 10099 / NBRC 100826 / MSB8) protein is Pectate trisaccharide-lyase.